The chain runs to 128 residues: Phycoerythrin alpha-3 chain, chloroplastic (128 aa).

Residues 1–52 constitute a chloroplast transit peptide; that stretch reads MFAKTLASLAVIGSAAAYVPMMSMDMGRREVVQAGAAAAAVTPFLSGAPAGA. 5-hydroxylysine is present on Lys56. A disordered region spans residues 70 to 89; that stretch reads GCSRAPKESTGGKAGGQDDE. 15,16-dihydrobiliverdin is bound by residues Cys71, Arg73, 77 to 78, and Lys93; that span reads ES.

This sequence belongs to the phycoerythrin family. As to quaternary structure, heterotetramer of 2 different alpha chains and 2 identical beta chains. The subunit composition could comprise of any combination of 2 out of 4 different alpha units with an invariant beta unit. In terms of processing, contains one covalently linked 15,16-dihydrobiliverdin chromophore.

The protein localises to the plastid. It localises to the chloroplast thylakoid membrane. Its function is as follows. Light-harvesting photosynthetic tetrapyrrole chromophore-protein from the phycobiliprotein complex. This Rhodomonas sp. (strain CS 24) (Chroomonas sp. (strain CS24)) protein is Phycoerythrin alpha-3 chain, chloroplastic (cpeA3).